The primary structure comprises 421 residues: Enolase (421 aa).

A (2R)-2-phosphoglycerate-binding site is contributed by Q162. E204 (proton donor) is an active-site residue. Mg(2+)-binding residues include D241, E284, and D311. K336, R365, S366, and K387 together coordinate (2R)-2-phosphoglycerate. The active-site Proton acceptor is K336.

This sequence belongs to the enolase family. Mg(2+) serves as cofactor.

It is found in the cytoplasm. Its subcellular location is the secreted. The protein localises to the cell surface. It catalyses the reaction (2R)-2-phosphoglycerate = phosphoenolpyruvate + H2O. It functions in the pathway carbohydrate degradation; glycolysis; pyruvate from D-glyceraldehyde 3-phosphate: step 4/5. Catalyzes the reversible conversion of 2-phosphoglycerate (2-PG) into phosphoenolpyruvate (PEP). It is essential for the degradation of carbohydrates via glycolysis. The chain is Enolase from Nautilia profundicola (strain ATCC BAA-1463 / DSM 18972 / AmH).